We begin with the raw amino-acid sequence, 543 residues long: MARYIFITGGVVSSLGKGLASAALGALLQARGYKVRLRKLDPYLNLDPGTMSPYQHGEVFVTDDGAETDLDLGHYERFTGRPATRADNITTGRIYQDILTKERRGDYLGATIQVVPHVTNAIKEFIVDSNDAYDFVLVEIGGTVGDIEGLPFFEAIRQIKNDLPRGDVIYIHLTLLPYIPSAGELKTKPTQHSVKELRSIGIQPDILLCRTDRSIPKEERRKLGLFCNVRESAVIEARDADSIYAVPEAYHAAGLDEEVLAAFGIASKGEPGLDRWTVINERIRNPEGEVTIAIVGKYTGMKDAYKSLIEALSHGGIANKVKVNIDWIESEVFENEDPAPFLEHVNGILVPGGFGQRGAEGKIEAARFARERNVPYFGICFGMQMAVIEAARNLAGIADANSTEFGPTKEPLVGLMTEWLRGNQLEKRSNAGDLGGTMRLGAYPAALKRGSRVSQIYGDVLEISERHRHRYEVNTAYKDRLEQHGLRFSGLSPDGVLPEIVEYEGHPWFIGVQFHPELKSRPFEPHPLFASFIEAAMAQSRLV.

The segment at 1 to 265 (MARYIFITGG…DEEVLAAFGI (265 aa)) is amidoligase domain. Position 13 (Ser-13) interacts with CTP. Ser-13 lines the UTP pocket. Residue 14–19 (SLGKGL) coordinates ATP. Tyr-54 contributes to the L-glutamine binding site. An ATP-binding site is contributed by Asp-71. Mg(2+)-binding residues include Asp-71 and Glu-139. CTP contacts are provided by residues 146–148 (DIE), 186–191 (KTKPTQ), and Lys-222. UTP-binding positions include 186 to 191 (KTKPTQ) and Lys-222. Position 238 to 240 (238 to 240 (RDA)) interacts with ATP. The 252-residue stretch at 291 to 542 (TIAIVGKYTG…IEAAMAQSRL (252 aa)) folds into the Glutamine amidotransferase type-1 domain. An L-glutamine-binding site is contributed by Gly-353. The active-site Nucleophile; for glutamine hydrolysis is the Cys-380. L-glutamine contacts are provided by residues 381–384 (FGMQ), Glu-404, and Arg-470. Residues His-515 and Glu-517 contribute to the active site.

The protein belongs to the CTP synthase family. In terms of assembly, homotetramer.

It carries out the reaction UTP + L-glutamine + ATP + H2O = CTP + L-glutamate + ADP + phosphate + 2 H(+). The enzyme catalyses L-glutamine + H2O = L-glutamate + NH4(+). The catalysed reaction is UTP + NH4(+) + ATP = CTP + ADP + phosphate + 2 H(+). It participates in pyrimidine metabolism; CTP biosynthesis via de novo pathway; CTP from UDP: step 2/2. Allosterically activated by GTP, when glutamine is the substrate; GTP has no effect on the reaction when ammonia is the substrate. The allosteric effector GTP functions by stabilizing the protein conformation that binds the tetrahedral intermediate(s) formed during glutamine hydrolysis. Inhibited by the product CTP, via allosteric rather than competitive inhibition. Catalyzes the ATP-dependent amination of UTP to CTP with either L-glutamine or ammonia as the source of nitrogen. Regulates intracellular CTP levels through interactions with the four ribonucleotide triphosphates. The sequence is that of CTP synthase from Rhodopseudomonas palustris (strain BisA53).